Reading from the N-terminus, the 506-residue chain is Galactose/methyl galactoside import ATP-binding protein MglA (506 aa).

ABC transporter domains follow at residues 14-249 (LEMK…VGRS) and 264-506 (VMLE…SLYL). An ATP-binding site is contributed by 46-53 (GENGAGKS).

It belongs to the ABC transporter superfamily. Galactose/methyl galactoside importer (TC 3.A.1.2.3) family. The complex is composed of one ATP-binding protein (MglA), two transmembrane proteins (MglC) and a solute-binding protein (MglB).

Its subcellular location is the cell inner membrane. The catalysed reaction is D-galactose(out) + ATP + H2O = D-galactose(in) + ADP + phosphate + H(+). The enzyme catalyses methyl beta-D-galactoside(out) + ATP + H2O = methyl beta-D-galactoside(in) + ADP + phosphate + H(+). In terms of biological role, part of the ABC transporter complex MglABC involved in galactose/methyl galactoside import. Responsible for energy coupling to the transport system. This chain is Galactose/methyl galactoside import ATP-binding protein MglA, found in Sodalis glossinidius (strain morsitans).